The primary structure comprises 604 residues: Serine/threonine-protein kinase A-Raf (604 aa).

Positions 19–91 (GTVKVYLPNK…DGEELIVEVL (73 aa)) constitute an RBD domain. A Phorbol-ester/DAG-type zinc finger spans residues 98 to 144 (MHNFVRKTFFSLAFCDFCLKFLFHGFRCQTCGYKFHQHCSSKVPTVC). Zn(2+)-binding residues include histidine 99, cysteine 112, cysteine 115, cysteine 125, cysteine 128, histidine 133, cysteine 136, and cysteine 144. Phosphoserine is present on residues serine 157 and serine 162. Disordered stretches follow at residues 177 to 222 (NELL…HMVS) and 241 to 288 (TDAA…EKKK). Position 181 is a phosphothreonine (threonine 181). Serine 186 bears the Phosphoserine mark. The span at 210 to 222 (IRSTSTPNVHMVS) shows a compositional bias: polar residues. The segment covering 252–265 (PRGSPSPASVSSGR) has biased composition (low complexity). Serine 255 and serine 267 each carry phosphoserine. The segment covering 272-287 (LPSEQRERKSLADEKK) has biased composition (basic and acidic residues). In terms of domain architecture, Protein kinase spans 308 to 568 (VQLLKRIGTG…PQILATIELL (261 aa)). Residues 314–322 (IGTGSFGTV) and lysine 334 each bind ATP. Threonine 316 carries the phosphothreonine modification. Aspartate 427 serves as the catalytic Proton acceptor.

It belongs to the protein kinase superfamily. TKL Ser/Thr protein kinase family. RAF subfamily. As to quaternary structure, interacts with TH1L/NELFD. Zn(2+) is required as a cofactor. Post-translationally, dephosphorylation by the SHOC2-MRAS-PP1c (SMP) complex consisting of SHOC2, GTP-bound M-Ras/MRAS and the catalytic subunit of protein phosphatase 1 (PPP1CA, PPP1CB or PPP1CC); this relieves inactivation and stimulates kinase activity.

It catalyses the reaction L-seryl-[protein] + ATP = O-phospho-L-seryl-[protein] + ADP + H(+). The enzyme catalyses L-threonyl-[protein] + ATP = O-phospho-L-threonyl-[protein] + ADP + H(+). Its function is as follows. Involved in the transduction of mitogenic signals from the cell membrane to the nucleus. May also regulate the TOR signaling cascade. Phosphorylates PFKFB2. The protein is Serine/threonine-protein kinase A-Raf (Araf) of Mus musculus (Mouse).